Consider the following 431-residue polypeptide: Glycerol-3-phosphate dehydrogenase [NAD(P)+] (431 aa).

The segment covering 1-19 has biased composition (polar residues); that stretch reads MTSANDKSTDTNVDSTQAE. Positions 1–25 are disordered; that stretch reads MTSANDKSTDTNVDSTQAEQKMAEK. Residues S79, F80, R100, and K173 each contribute to the NADPH site. Sn-glycerol 3-phosphate is bound by residues K173 and G201. NADPH is bound at residue A205. Sn-glycerol 3-phosphate-binding residues include K256, D309, S319, R320, and N321. The Proton acceptor role is filled by K256. R320 provides a ligand contact to NADPH. E346 lines the NADPH pocket.

This sequence belongs to the NAD-dependent glycerol-3-phosphate dehydrogenase family.

Its subcellular location is the cytoplasm. The catalysed reaction is sn-glycerol 3-phosphate + NAD(+) = dihydroxyacetone phosphate + NADH + H(+). It catalyses the reaction sn-glycerol 3-phosphate + NADP(+) = dihydroxyacetone phosphate + NADPH + H(+). The protein operates within membrane lipid metabolism; glycerophospholipid metabolism. Functionally, catalyzes the reduction of the glycolytic intermediate dihydroxyacetone phosphate (DHAP) to sn-glycerol 3-phosphate (G3P), the key precursor for phospholipid synthesis. The polypeptide is Glycerol-3-phosphate dehydrogenase [NAD(P)+] (Psychrobacter arcticus (strain DSM 17307 / VKM B-2377 / 273-4)).